The following is a 483-amino-acid chain: Glycogen synthase (483 aa).

K15 provides a ligand contact to ADP-alpha-D-glucose.

It belongs to the glycosyltransferase 1 family. Bacterial/plant glycogen synthase subfamily.

It catalyses the reaction [(1-&gt;4)-alpha-D-glucosyl](n) + ADP-alpha-D-glucose = [(1-&gt;4)-alpha-D-glucosyl](n+1) + ADP + H(+). It participates in glycan biosynthesis; glycogen biosynthesis. Functionally, synthesizes alpha-1,4-glucan chains using ADP-glucose. This Petrotoga mobilis (strain DSM 10674 / SJ95) protein is Glycogen synthase.